A 380-amino-acid chain; its full sequence is Cytochrome b (380 aa).

Transmembrane regions (helical) follow at residues 33 to 53 (FGSL…FLAM), 77 to 98 (WLIR…YMHI), 113 to 133 (WNIG…GYVL), and 178 to 198 (FFAF…IHLL). Positions 83 and 97 each coordinate heme b. H182 and H196 together coordinate heme b. H201 lines the a ubiquinone pocket. The next 4 membrane-spanning stretches (helical) occupy residues 226 to 246 (YKDL…ALFS), 288 to 308 (LGGV…PLLH), 320 to 340 (ITQF…WIGG), and 347 to 367 (FIII…VLFP).

The protein belongs to the cytochrome b family. In terms of assembly, the cytochrome bc1 complex contains 3 respiratory subunits (MT-CYB, CYC1 and UQCRFS1), 2 core proteins (UQCRC1 and UQCRC2) and probably 6 low-molecular weight proteins. Heme b is required as a cofactor.

It localises to the mitochondrion inner membrane. Its function is as follows. Component of the ubiquinol-cytochrome c reductase complex (complex III or cytochrome b-c1 complex) that is part of the mitochondrial respiratory chain. The b-c1 complex mediates electron transfer from ubiquinol to cytochrome c. Contributes to the generation of a proton gradient across the mitochondrial membrane that is then used for ATP synthesis. The chain is Cytochrome b (mt-cyb) from Carassius auratus (Goldfish).